We begin with the raw amino-acid sequence, 147 residues long: Hemoglobin subunit beta-1 (147 aa).

The 145-residue stretch at 3 to 147 (KWSKTELTII…VVSALGKQYH (145 aa)) folds into the Globin domain. Heme b is bound by residues His64 and His93.

The protein belongs to the globin family. In terms of assembly, hb1 is a heterotetramer of two alpha chains and two beta-1 chains. In terms of tissue distribution, red blood cells.

Involved in oxygen transport from gills to the various peripheral tissues. In Cygnodraco mawsoni (Antarctic dragonfish), this protein is Hemoglobin subunit beta-1 (hbb1).